The chain runs to 1155 residues: Pesticidal crystal protein Cry1Ab (1155 aa).

The protein belongs to the delta endotoxin family.

In terms of biological role, promotes colloidosmotic lysis by binding to the midgut epithelial cells of many lepidopteran larvae. The sequence is that of Pesticidal crystal protein Cry1Ab (cry1Ab) from Bacillus thuringiensis subsp. aizawai.